A 228-amino-acid polypeptide reads, in one-letter code: L-ribulose-5-phosphate 4-epimerase UlaF (228 aa).

Substrate contacts are provided by residues 26–27, 43–44, and 72–73; these read GN, SG, and SS. Zn(2+) is bound by residues Asp-74, His-93, and His-95. The active-site Proton donor/acceptor is the Asp-118. His-167 provides a ligand contact to Zn(2+). Catalysis depends on Tyr-225, which acts as the Proton donor/acceptor.

The protein belongs to the aldolase class II family. AraD/FucA subfamily. It depends on Zn(2+) as a cofactor.

It carries out the reaction L-ribulose 5-phosphate = D-xylulose 5-phosphate. It participates in cofactor degradation; L-ascorbate degradation; D-xylulose 5-phosphate from L-ascorbate: step 4/4. In terms of biological role, catalyzes the isomerization of L-ribulose 5-phosphate to D-xylulose 5-phosphate. Is involved in the anaerobic L-ascorbate utilization. In Shigella dysenteriae serotype 1 (strain Sd197), this protein is L-ribulose-5-phosphate 4-epimerase UlaF.